A 393-amino-acid chain; its full sequence is Putative amino-acid ABC transporter permease protein YhdX (393 aa).

8 helical membrane passes run 21–41 (AWLF…WLFH), 92–112 (LLVS…IGLA), 128–148 (IEIF…FAVL), 180–200 (DGFI…VGLF), 219–239 (IAAV…GAAL), 256–276 (VLIP…SAFI), 333–353 (SSLA…GTVL), and 363–383 (IAMT…LMNI). Positions 88-381 (LLNTLLVSAL…IISLTISLLM (294 aa)) constitute an ABC transmembrane type-1 domain.

It belongs to the binding-protein-dependent transport system permease family. HisMQ subfamily.

The protein resides in the cell inner membrane. Its function is as follows. Probably part of the binding-protein-dependent transport system YdhWXYZ for an amino acid; probably responsible for the translocation of the substrate across the membrane. This is Putative amino-acid ABC transporter permease protein YhdX (yhdX) from Escherichia coli (strain K12).